Reading from the N-terminus, the 597-residue chain is Sodium/mannose cotransporter SLC5A10 (597 aa).

Residues 1–16 (MAVDNSTSDAHTPGRQ) are Extracellular-facing. N5 carries N-linked (GlcNAc...) asparagine glycosylation. A helical transmembrane segment spans residues 17–37 (LTVVDIAIIAVYFALNVAVGI). The Cytoplasmic segment spans residues 38–73 (WSSCRASRNTVRGYFLAGRDMTWWPIGASLFASSEG). The helical transmembrane segment at 74–94 (SGLFIGLAGSGAAGGLAVAGF) threads the bilayer. Residues 95–100 (EWNATY) lie on the Extracellular side of the membrane. N97 is a glycosylation site (N-linked (GlcNAc...) asparagine). Residues 101–121 (VLLALAWVFVPIYLSSEIVTM) traverse the membrane as a helical segment. Residues 122 to 139 (PEYMQKRYGGQRIRMYLS) lie on the Cytoplasmic side of the membrane. Residues 140–162 (VLSLLLSVFTKISIDLYAGALFV) traverse the membrane as a helical segment. The Extracellular portion of the chain corresponds to 163–174 (HICLGWNFYLST). Residues 175–195 (VIMLAITALYTIAGGLTAVIY) form a helical membrane-spanning segment. The Cytoplasmic segment spans residues 196-201 (TDALQT). The helical transmembrane segment at 202-222 (LVMVAGAVILTIKAFEQIGGY) threads the bilayer. Residues 223–265 (EQLAEAYAQAVPSRTISNTTCHVPRADAMHMFRDPYTADLPWT) lie on the Extracellular side of the membrane. A helical membrane pass occupies residues 266-286 (GMTFGLTIMAAWYWCTDQVIV). The Cytoplasmic portion of the chain corresponds to 287 to 301 (QRSLSARDLNHAKGG). A helical membrane pass occupies residues 302 to 322 (SILASYLKMLPMGLMVMPGMI). The Extracellular portion of the chain corresponds to 323-367 (SRVLFPDDVGCVVPAECLRACGAEIGCSNIAYPKLVMELMPTGLR). Residues 368–388 (GLMVAVMMAALMSSLTSIFNS) traverse the membrane as a helical segment. At 389-410 (SSTLFTMDIWRRLRPRAGEREL) the chain is on the cytoplasmic side. A helical membrane pass occupies residues 411–431 (LLVGRLVIVVLVGVSVAWIPV). Over 432–444 (LQGSNGGQLFIYM) the chain is Extracellular. Residues 445-465 (QSVTSSLAPPVTAVFVLGIFW) form a helical membrane-spanning segment. The Cytoplasmic portion of the chain corresponds to 466-472 (RRANEQG). A helical membrane pass occupies residues 473-493 (AFWGLMAGLAVGATRLVLEFL). Residues 494–514 (HPAPPCGHPDTRPPILHGVHY) are Extracellular-facing. Residues 515 to 535 (LHFAVALFLLSGAVVVAGSLL) traverse the membrane as a helical segment. At 536 to 576 (TPHPQGVQIQSLTWWTLAQDLPLGVKTGDGRASQRHAFWAR) the chain is on the cytoplasmic side. A helical transmembrane segment spans residues 577-597 (VCGVNAILLMCVNIFFYTYFA).

The protein belongs to the sodium:solute symporter (SSF) (TC 2.A.21) family. As to expression, predominantyl expressed in kidney. Also detected at very low levels in testes, skeletal muscle, and spleen.

The protein resides in the apical cell membrane. It catalyses the reaction D-mannose(out) + Na(+)(out) = D-mannose(in) + Na(+)(in). The enzyme catalyses D-fructopyranose(out) + Na(+)(out) = D-fructopyranose(in) + Na(+)(in). Electrogenic Na+-coupled sugar symporter that actively transports D-mannose or D-fructose at the plasma membrane, with a Na+ to sugar coupling ratio of 1:1. Transporter activity is driven by a transmembrane Na+ electrochemical gradient set by the Na+/K+ pump. Exclusively recognizes sugar substrates having a pyranose ring with an axial hydroxyl group on carbon 2. Has likely evolved to enable renal reabsorption of D-mannose, an important constituent of oligosaccharide chains of glycoproteins. Contributes to dietary D-fructose reabsorption from glomerular filtrate across the brush border of the kidney. This Bos taurus (Bovine) protein is Sodium/mannose cotransporter SLC5A10 (SLC5A10).